Consider the following 136-residue polypeptide: Large ribosomal subunit protein uL16 (136 aa).

The protein belongs to the universal ribosomal protein uL16 family. As to quaternary structure, part of the 50S ribosomal subunit.

In terms of biological role, binds 23S rRNA and is also seen to make contacts with the A and possibly P site tRNAs. In Alteromonas mediterranea (strain DSM 17117 / CIP 110805 / LMG 28347 / Deep ecotype), this protein is Large ribosomal subunit protein uL16.